Reading from the N-terminus, the 247-residue chain is Golgi-associated RAB2 interactor protein 5A (247 aa).

A compositionally biased stretch (pro residues) spans 1-16; the sequence is MGPPLWPDLQEPPPPG. Disordered regions lie at residues 1 to 22 and 60 to 92; these read MGPP…SQIR and GDIA…PTGR.

The protein belongs to the GARIN family. Interacts (via N-terminus) with RAB2B (in GTP-bound form).

The protein localises to the golgi apparatus. Its function is as follows. RAB2B effector protein which promotes cytosolic DNA-induced innate immune responses. Regulates IFN responses against DNA viruses by regulating the CGAS-STING signaling axis. This chain is Golgi-associated RAB2 interactor protein 5A, found in Homo sapiens (Human).